A 615-amino-acid chain; its full sequence is uncharacterized protein (615 aa).

Ser-48 bears the Phosphoserine mark. The segment covering 424-433 has biased composition (acidic residues); sequence DRENELEEGS. Residues 424-615 form a disordered region; that stretch reads DRENELEEGS…YARKKTKKNV (192 aa). Basic and acidic residues-rich tracts occupy residues 439–476, 484–496, 504–521, and 529–561; these read DNER…KEVG, DGNK…KEVA, ESEK…KEVA, and ESEK…EPSK. 2 stretches are compositionally biased toward basic residues: residues 579 to 589 and 606 to 615; these read KKPKVVKKVAK and YARKKTKKNV.

This is an uncharacterized protein from Arabidopsis thaliana (Mouse-ear cress).